The following is a 1451-amino-acid chain: Glutamate receptor ionotropic, NMDA 2A (1451 aa).

An N-terminal signal peptide occupies residues 1 to 20; that stretch reads MGMFVLLLYTFLYAGDLGHG. Residues 21 to 547 lie on the Extracellular side of the membrane; it reads AEKSFPVLNI…PSAFLEPFSA (527 aa). N-linked (GlcNAc...) asparagine glycosylation occurs at Asn-67. An intrachain disulfide couples Cys-79 to Cys-312. Residues His-120, Asp-258, and Asp-274 each coordinate Zn(2+). Residues Asn-332, Asn-372, Asn-435, and Asn-436 are each glycosylated (N-linked (GlcNAc...) asparagine). Intrachain disulfides connect Cys-421–Cys-447 and Cys-428–Cys-448. Residues Ser-503, Thr-505, and Arg-510 each contribute to the L-glutamate site. Residue Asn-533 is glycosylated (N-linked (GlcNAc...) asparagine). The chain crosses the membrane as a helical span at residues 548–568; it reads SVWVMMFVMLLLVSAMAVFIF. Over 569–592 the chain is Cytoplasmic; that stretch reads EYFSPVGYNRNLAQGKDPHGPSFT. A pore-forming region spans residues 591–612; sequence FTIGKAVWLLWGLVFNNSVPVQ. Positions 593–612 form an intramembrane region, discontinuously helical; it reads IGKAVWLLWGLVFNNSVPVQ. Over 613 to 617 the chain is Cytoplasmic; sequence NPKGT. Residues 618–637 traverse the membrane as a helical segment; the sequence is TSKIIVSIWAFFAVIFLASY. At 638–808 the chain is on the extracellular side; that stretch reads TANLAAFMIQ…VMSSQLDIDN (171 aa). N-linked (GlcNAc...) asparagine glycosylation is present at Asn-679. Ser-681, Thr-682, and Asp-723 together coordinate L-glutamate. Cys-737 and Cys-792 are joined by a disulfide. A helical transmembrane segment spans residues 809–829; sequence MAGVFYMLAAAMALSLITFVW. At 830–1451 the chain is on the cytoplasmic side; the sequence is EHLFYWKLRF…KKMPSLESDV (622 aa). Residues 1011 to 1022 show a composition bias toward polar residues; the sequence is TLRQTQGSVNEN. Disordered stretches follow at residues 1011–1080 and 1100–1165; these read TLRQ…VSAK and NRDK…GRLP. 3 stretches are compositionally biased toward basic and acidic residues: residues 1055–1073, 1100–1113, and 1138–1149; these read CHID…DNLK, NRDK…DKEP, and YQDHNDNYRKTE.

Belongs to the glutamate-gated ion channel (TC 1.A.10.1) family. In terms of assembly, heterotetramer. Forms heterotetrameric channels composed of two GluN1/zeta subunits (GRIN1), and two identical GluN2/epsilon subunits (GRIN2A, GRIN2B, GRIN2C or GRIN2D) or GluN3 subunits (GRIN3A or GRIN3B) (in vitro). In vivo, the subunit composition may depend on the expression levels of the different subunits.

The protein resides in the cell membrane. Its subcellular location is the postsynaptic cell membrane. The enzyme catalyses Ca(2+)(in) = Ca(2+)(out). The catalysed reaction is Na(+)(in) = Na(+)(out). It catalyses the reaction K(+)(in) = K(+)(out). In terms of biological role, component of N-methyl-D-aspartate (NMDA) receptors (NMDARs) that function as heterotetrameric, ligand-gated cation channels with high calcium permeability and voltage-dependent block by Mg(2+). MDARs participate in synaptic plasticity. Channel activation requires binding of the neurotransmitter L-glutamate to the GluN2 subunit, glycine binding to the GluN1 subunit, plus membrane depolarization to eliminate channel inhibition by Mg(2+). NMDARs mediate simultaneously the potasium efflux and the influx of calcium and sodium. Each GluN2 subunit confers differential attributes to channel properties, including activation, deactivation and desensitization kinetics, pH sensitivity, Ca2(+) permeability, and binding to allosteric modulators. Plays a role in dendritic branching in brain neurons and in synaptic plasticity. In Xenopus laevis (African clawed frog), this protein is Glutamate receptor ionotropic, NMDA 2A.